A 424-amino-acid chain; its full sequence is UDP-N-acetylglucosamine 1-carboxyvinyltransferase (424 aa).

Residue 22 to 23 (KN) coordinates phosphoenolpyruvate. Residue Arg-95 participates in UDP-N-acetyl-alpha-D-glucosamine binding. The active-site Proton donor is the Cys-119. At Cys-119 the chain carries 2-(S-cysteinyl)pyruvic acid O-phosphothioketal. UDP-N-acetyl-alpha-D-glucosamine is bound by residues 124–128 (RPVDQ), Asp-311, and Ile-333.

The protein belongs to the EPSP synthase family. MurA subfamily.

The protein localises to the cytoplasm. It catalyses the reaction phosphoenolpyruvate + UDP-N-acetyl-alpha-D-glucosamine = UDP-N-acetyl-3-O-(1-carboxyvinyl)-alpha-D-glucosamine + phosphate. It participates in cell wall biogenesis; peptidoglycan biosynthesis. Its function is as follows. Cell wall formation. Adds enolpyruvyl to UDP-N-acetylglucosamine. This chain is UDP-N-acetylglucosamine 1-carboxyvinyltransferase, found in Polaromonas naphthalenivorans (strain CJ2).